We begin with the raw amino-acid sequence, 913 residues long: Pentatricopeptide repeat-containing protein At1g10270 (913 aa).

Positions 34 to 138 (SLSPANEDPE…PNAPRLPDST (105 aa)) are disordered. Residues 64–73 (DPSQFQIPQN) show a composition bias toward polar residues. Positions 74–84 (HTPPIPYPPIP) are enriched in pro residues. Positions 99–108 (ERRRRKRRLR) match the Nuclear localization signal motif. The segment covering 108 to 130 (RIEPPLHALRRDPSAPPPKRDPN) has biased composition (basic and acidic residues). Residues 134–167 (LPDSTSALVGQRLNLHNRVQSLIRASDLDAASKL) are leucine-zipper. PPR repeat units follow at residues 179-214 (TVFTCNAIIAAMYRAKRYSESISLFQYFFKQSNIVP), 215-250 (NVVSYNQIINAHCDEGNVDEALEVYRHILANAPFAP), 251-285 (SSVTYRHLTKGLVQAGRIGDAASLLREMLSKGQAA), 286-316 (DSTVYNNLIRGYLDLGDFDKAVEFFDELKSK), 321-355 (DGIVNATFMEYWFEKGNDKEAMESYRSLLDKKFRM), 356-390 (HPPTGNVLLEVFLKFGKKDEAWALFNEMLDNHAPP), 396-426 (NSDTVGIMVNECFKMGEFSEAINTFKKVGSK), 435-469 (DYLGYCNIVTRFCEQGMLTEAERFFAEGVSRSLPA), 470-504 (DAPSHRAMIDAYLKAERIDDAVKMLDRMVDVNLRV), 505-539 (VADFGARVFGELIKNGKLTESAEVLTKMGEREPKP), and 540-574 (DPSIYDVVVRGLCDGDALDQAKDIVGEMIRHNVGV). Positions 607-913 (RNAGQSGNTP…QEKKVVELRN (307 aa)) are disordered. The segment covering 639 to 649 (WTSQGVVHSNS) has biased composition (polar residues). 2 stretches are compositionally biased toward low complexity: residues 650 to 666 (GWANGTAGQTAGGAYKA) and 673 to 690 (SWSNTSDNQQQQSWSNQT). The tract at residues 674–858 (WSNTSDNQQQ…TAQQQWSNQT (185 aa)) is 14 X 11 AA approximate tandem repeats of W-x(2)-Q-x(4)-Q-x(2). Polar residues predominate over residues 691 to 700 (AGQQPPSWSR). Low complexity predominate over residues 706-727 (QQQQSWSQQSGWSSPSGHQQSW). The span at 728 to 761 (TNQTAGQQQPWANQTPGQQQQWANQTPGQQQQLA) shows a compositional bias: polar residues. A compositionally biased stretch (low complexity) spans 762–791 (NQTPGQQQQWANQTPGQQQQWANQNNGHQQ). A compositionally biased stretch (polar residues) spans 792-814 (PWANQNTGHQQSWANQTPSQQQP). A compositionally biased stretch (low complexity) spans 815-845 (WANQTTGQQQGWGNQTTGQQQQWANQTAGQQ). Composition is skewed to polar residues over residues 846 to 867 (SGWTAQQQWSNQTASHQQSQWL) and 875 to 894 (ANQTPWSNSVDSHLPQQQEP). Residues 899–913 (ECQETQEKKVVELRN) are compositionally biased toward basic and acidic residues.

Belongs to the PPR family. P subfamily. In terms of assembly, interacts with RPB36B through its WQQ domain. In terms of tissue distribution, ubiquitous but preferentially expressed in gametophytes and young embryos.

The protein localises to the nucleus. Its function is as follows. May function as a transcriptional regulator essential for early embryogenesis. The chain is Pentatricopeptide repeat-containing protein At1g10270 (GRP23) from Arabidopsis thaliana (Mouse-ear cress).